The primary structure comprises 359 residues: Peptide chain release factor 1 (359 aa).

Q236 bears the N5-methylglutamine mark.

Belongs to the prokaryotic/mitochondrial release factor family. Post-translationally, methylated by PrmC. Methylation increases the termination efficiency of RF1.

It is found in the cytoplasm. Functionally, peptide chain release factor 1 directs the termination of translation in response to the peptide chain termination codons UAG and UAA. This Streptococcus pyogenes serotype M12 (strain MGAS2096) protein is Peptide chain release factor 1.